The following is a 498-amino-acid chain: Glycerol kinase (498 aa).

Thr-12 contributes to the ADP binding site. Thr-12, Thr-13, and Ser-14 together coordinate ATP. Residue Thr-12 coordinates sn-glycerol 3-phosphate. Arg-16 serves as a coordination point for ADP. 4 residues coordinate sn-glycerol 3-phosphate: Arg-82, Glu-83, Tyr-134, and Asp-243. 5 residues coordinate glycerol: Arg-82, Glu-83, Tyr-134, Asp-243, and Gln-244. Residues Thr-265 and Gly-308 each coordinate ADP. Positions 265, 308, 312, and 409 each coordinate ATP. Positions 409 and 413 each coordinate ADP.

It belongs to the FGGY kinase family. As to quaternary structure, homotetramer and homodimer (in equilibrium).

It carries out the reaction glycerol + ATP = sn-glycerol 3-phosphate + ADP + H(+). Its pathway is polyol metabolism; glycerol degradation via glycerol kinase pathway; sn-glycerol 3-phosphate from glycerol: step 1/1. Activated by phosphorylation and inhibited by fructose 1,6-bisphosphate (FBP). Functionally, key enzyme in the regulation of glycerol uptake and metabolism. Catalyzes the phosphorylation of glycerol to yield sn-glycerol 3-phosphate. This Clostridium botulinum (strain Okra / Type B1) protein is Glycerol kinase.